Here is a 321-residue protein sequence, read N- to C-terminus: Lipoyl synthase (321 aa).

[4Fe-4S] cluster contacts are provided by Cys-68, Cys-73, Cys-79, Cys-94, Cys-98, Cys-101, and Ser-308. The 218-residue stretch at 80 to 297 (FNHGTATFMI…KDYAEEIGFT (218 aa)) folds into the Radical SAM core domain.

This sequence belongs to the radical SAM superfamily. Lipoyl synthase family. It depends on [4Fe-4S] cluster as a cofactor.

It is found in the cytoplasm. It catalyses the reaction [[Fe-S] cluster scaffold protein carrying a second [4Fe-4S](2+) cluster] + N(6)-octanoyl-L-lysyl-[protein] + 2 oxidized [2Fe-2S]-[ferredoxin] + 2 S-adenosyl-L-methionine + 4 H(+) = [[Fe-S] cluster scaffold protein] + N(6)-[(R)-dihydrolipoyl]-L-lysyl-[protein] + 4 Fe(3+) + 2 hydrogen sulfide + 2 5'-deoxyadenosine + 2 L-methionine + 2 reduced [2Fe-2S]-[ferredoxin]. It participates in protein modification; protein lipoylation via endogenous pathway; protein N(6)-(lipoyl)lysine from octanoyl-[acyl-carrier-protein]: step 2/2. Its function is as follows. Catalyzes the radical-mediated insertion of two sulfur atoms into the C-6 and C-8 positions of the octanoyl moiety bound to the lipoyl domains of lipoate-dependent enzymes, thereby converting the octanoylated domains into lipoylated derivatives. The polypeptide is Lipoyl synthase (Shewanella loihica (strain ATCC BAA-1088 / PV-4)).